The chain runs to 317 residues: Cell division protein FtsQ (317 aa).

The Cytoplasmic portion of the chain corresponds to 1-63 (MDGGGRFVFA…RIHIPAHTGT (63 aa)). A helical membrane pass occupies residues 64–82 (ISAVAFYAMIGLYGMSLGG). Residues 83 to 317 (HTNIVTQTTT…KALKKAEKNT (235 aa)) lie on the Periplasmic side of the membrane. The region spanning 97–165 (FAVEDVKVSG…KTVEVRLKER (69 aa)) is the POTRA domain.

Belongs to the FtsQ/DivIB family. FtsQ subfamily.

The protein resides in the cell inner membrane. Functionally, essential cell division protein. The protein is Cell division protein FtsQ of Agrobacterium fabrum (strain C58 / ATCC 33970) (Agrobacterium tumefaciens (strain C58)).